A 187-amino-acid chain; its full sequence is Elongation factor P (187 aa).

It belongs to the elongation factor P family.

It is found in the cytoplasm. It functions in the pathway protein biosynthesis; polypeptide chain elongation. In terms of biological role, involved in peptide bond synthesis. Stimulates efficient translation and peptide-bond synthesis on native or reconstituted 70S ribosomes in vitro. Probably functions indirectly by altering the affinity of the ribosome for aminoacyl-tRNA, thus increasing their reactivity as acceptors for peptidyl transferase. The chain is Elongation factor P from Fusobacterium nucleatum subsp. nucleatum (strain ATCC 25586 / DSM 15643 / BCRC 10681 / CIP 101130 / JCM 8532 / KCTC 2640 / LMG 13131 / VPI 4355).